The chain runs to 293 residues: 4-diphosphocytidyl-2-C-methyl-D-erythritol kinase (293 aa).

The active site involves K16. 99-109 (PMGAGLGGGSS) lines the ATP pocket. The active site involves D141.

Belongs to the GHMP kinase family. IspE subfamily.

It catalyses the reaction 4-CDP-2-C-methyl-D-erythritol + ATP = 4-CDP-2-C-methyl-D-erythritol 2-phosphate + ADP + H(+). It functions in the pathway isoprenoid biosynthesis; isopentenyl diphosphate biosynthesis via DXP pathway; isopentenyl diphosphate from 1-deoxy-D-xylulose 5-phosphate: step 3/6. Catalyzes the phosphorylation of the position 2 hydroxy group of 4-diphosphocytidyl-2C-methyl-D-erythritol. The chain is 4-diphosphocytidyl-2-C-methyl-D-erythritol kinase from Burkholderia mallei (strain NCTC 10247).